Reading from the N-terminus, the 260-residue chain is Phosphate import ATP-binding protein PstB (260 aa).

Positions 14–255 (IETENLSLFY…PKNTKTEEYI (242 aa)) constitute an ABC transporter domain. 46 to 53 (GPSGCGKS) lines the ATP pocket.

This sequence belongs to the ABC transporter superfamily. Phosphate importer (TC 3.A.1.7) family. As to quaternary structure, the complex is composed of two ATP-binding proteins (PstB), two transmembrane proteins (PstC and PstA) and a solute-binding protein (PstS).

It is found in the cell inner membrane. The catalysed reaction is phosphate(out) + ATP + H2O = ADP + 2 phosphate(in) + H(+). In terms of biological role, part of the ABC transporter complex PstSACB involved in phosphate import. Responsible for energy coupling to the transport system. This chain is Phosphate import ATP-binding protein PstB, found in Borrelia garinii subsp. bavariensis (strain ATCC BAA-2496 / DSM 23469 / PBi) (Borreliella bavariensis).